The primary structure comprises 257 residues: Large ribosomal subunit protein uL2 (257 aa).

Glycyl lysine isopeptide (Lys-Gly) (interchain with G-Cter in SUMO2) cross-links involve residues K42 and K149. The tract at residues 207–232 (VEHPFGGGNHQHIGKPSTIRRDAPAG) is disordered. The residue at position 216 (H216) is a (3S)-3-hydroxyhistidine. Residues K234 and K250 each participate in a glycyl lysine isopeptide (Lys-Gly) (interchain with G-Cter in SUMO2) cross-link.

Belongs to the universal ribosomal protein uL2 family. Component of the large ribosomal subunit. Interacts with CRY1. Hydroxylated on His-216 by RIOX1. The modification is impaired by hypoxia.

The protein localises to the cytoplasm. Its function is as follows. Component of the large ribosomal subunit. The ribosome is a large ribonucleoprotein complex responsible for the synthesis of proteins in the cell. In Bos taurus (Bovine), this protein is Large ribosomal subunit protein uL2 (RPL8).